The sequence spans 870 residues: Aminopeptidase N (870 aa).

Substrate contacts are provided by residues E121 and 261–265 (GAMEN). H297 serves as a coordination point for Zn(2+). E298 acts as the Proton acceptor in catalysis. Positions 301 and 320 each coordinate Zn(2+).

The protein belongs to the peptidase M1 family. The cofactor is Zn(2+).

It localises to the cell inner membrane. It carries out the reaction Release of an N-terminal amino acid, Xaa-|-Yaa- from a peptide, amide or arylamide. Xaa is preferably Ala, but may be most amino acids including Pro (slow action). When a terminal hydrophobic residue is followed by a prolyl residue, the two may be released as an intact Xaa-Pro dipeptide.. Functionally, aminopeptidase N is involved in the degradation of intracellular peptides generated by protein breakdown during normal growth as well as in response to nutrient starvation. This is Aminopeptidase N (pepN) from Escherichia coli (strain K12).